We begin with the raw amino-acid sequence, 506 residues long: ATP synthase subunit alpha (506 aa).

170–177 (GDRQTGKT) lines the ATP pocket.

This sequence belongs to the ATPase alpha/beta chains family. In terms of assembly, F-type ATPases have 2 components, CF(1) - the catalytic core - and CF(0) - the membrane proton channel. CF(1) has five subunits: alpha(3), beta(3), gamma(1), delta(1), epsilon(1). CF(0) has four main subunits: a(1), b(1), b'(1) and c(9-12).

The protein localises to the cellular thylakoid membrane. The enzyme catalyses ATP + H2O + 4 H(+)(in) = ADP + phosphate + 5 H(+)(out). In terms of biological role, produces ATP from ADP in the presence of a proton gradient across the membrane. The alpha chain is a regulatory subunit. This Synechococcus sp. (strain WH7803) protein is ATP synthase subunit alpha.